The sequence spans 566 residues: Repressible alkaline phosphatase (566 aa).

A compositionally biased stretch (polar residues) spans Met-1 to Thr-11. The segment at Met-1–Arg-27 is disordered. At Met-1–Lys-33 the chain is on the cytoplasmic side. The chain crosses the membrane as a helical span at residues Ile-34 to Leu-59. Position 75 (Asp-75) interacts with Mg(2+). Position 75 (Asp-75) interacts with Zn(2+). Residue Ser-123 is the Phosphoserine intermediate of the active site. Ser-123 is modified (phosphoserine). Residues Asp-174 and Thr-176 each contribute to the Mg(2+) site. Asn-268 carries N-linked (GlcNAc...) asparagine glycosylation. Glu-325 provides a ligand contact to Mg(2+). Positions 330, 334, 373, and 374 each coordinate Zn(2+). N-linked (GlcNAc...) asparagine glycosylation occurs at Asn-401. His-484 contributes to the Zn(2+) binding site.

This sequence belongs to the alkaline phosphatase family. Requires Mg(2+) as cofactor. Zn(2+) serves as cofactor.

Its subcellular location is the vacuole membrane. It localises to the cytoplasm. It carries out the reaction a phosphate monoester + H2O = an alcohol + phosphate. It catalyses the reaction (2E,6E)-farnesyl diphosphate + H2O = (2E,6E)-farnesol + diphosphate. The catalysed reaction is beta-D-fructose 2,6-bisphosphate + H2O = beta-D-fructose 2-phosphate + phosphate. In terms of biological role, phosphatase with broad substrate specificity. A truncated (soluble) version of the protein is responsible for the production of (E,E)-farnesol from (E,E)-farnesyl diphosphate. Acts as a fructose-2,6-bisphosphate 6-phosphatase. In Saccharomyces cerevisiae (strain ATCC 204508 / S288c) (Baker's yeast), this protein is Repressible alkaline phosphatase (PHO8).